The chain runs to 254 residues: 4-hydroxy-tetrahydrodipicolinate reductase (254 aa).

Residues 10-15 (GATGKV) and 101-103 (GTT) contribute to the NAD(+) site. His157 (proton donor/acceptor) is an active-site residue. Residue His158 participates in (S)-2,3,4,5-tetrahydrodipicolinate binding. Catalysis depends on Lys161, which acts as the Proton donor. 167–168 (GT) is a (S)-2,3,4,5-tetrahydrodipicolinate binding site.

It belongs to the DapB family.

Its subcellular location is the cytoplasm. The enzyme catalyses (S)-2,3,4,5-tetrahydrodipicolinate + NAD(+) + H2O = (2S,4S)-4-hydroxy-2,3,4,5-tetrahydrodipicolinate + NADH + H(+). It catalyses the reaction (S)-2,3,4,5-tetrahydrodipicolinate + NADP(+) + H2O = (2S,4S)-4-hydroxy-2,3,4,5-tetrahydrodipicolinate + NADPH + H(+). It participates in amino-acid biosynthesis; L-lysine biosynthesis via DAP pathway; (S)-tetrahydrodipicolinate from L-aspartate: step 4/4. In terms of biological role, catalyzes the conversion of 4-hydroxy-tetrahydrodipicolinate (HTPA) to tetrahydrodipicolinate. In Symbiobacterium thermophilum (strain DSM 24528 / JCM 14929 / IAM 14863 / T), this protein is 4-hydroxy-tetrahydrodipicolinate reductase.